A 393-amino-acid polypeptide reads, in one-letter code: S-adenosylmethionine synthase 1 (393 aa).

Residue E9 coordinates Mg(2+). H15 is a binding site for ATP. E43 is a binding site for K(+). L-methionine is bound by residues E56 and Q99. ATP contacts are provided by residues 167-169, 235-238, D246, 252-253, A269, K273, and K277; these read DGK, SGRF, and RK. Position 246 (D246) interacts with L-methionine. K277 serves as a coordination point for L-methionine.

It belongs to the AdoMet synthase family. Homotetramer. Mn(2+) serves as cofactor. Requires Mg(2+) as cofactor. Co(2+) is required as a cofactor. The cofactor is K(+). It depends on NH4(+) as a cofactor. In terms of tissue distribution, mostly expressed in roots, and, to a lower extent, in hypocotyls and cotyledons.

It localises to the cytoplasm. The catalysed reaction is L-methionine + ATP + H2O = S-adenosyl-L-methionine + phosphate + diphosphate. The protein operates within amino-acid biosynthesis; S-adenosyl-L-methionine biosynthesis; S-adenosyl-L-methionine from L-methionine: step 1/1. Inhibited by products of SAMS reaction (SAM, Pi, PPi), substrate analogs (cycloleucine and ethionine), and alternative nucleotides (GTP, CTP and ADP). Strongly repressed by PPPi. In terms of biological role, catalyzes the formation of S-adenosylmethionine from methionine and ATP. The reaction comprises two steps that are both catalyzed by the same enzyme: formation of S-adenosylmethionine (AdoMet) and triphosphate, and subsequent hydrolysis of the triphosphate. This Catharanthus roseus (Madagascar periwinkle) protein is S-adenosylmethionine synthase 1 (SAMS1).